The sequence spans 341 residues: Protein quaking-A (341 aa).

Residues 87-153 enclose the KH domain; the sequence is FVPVKEYPDY…WEHLNEDLHV (67 aa). The short motif at 276–279 is the SH3-binding element; the sequence is PPTP. The Nuclear localization signal signature appears at 324-330; the sequence is RVHPYQR.

This sequence belongs to the quaking family. As to quaternary structure, homodimer; does not require RNA to homodimerize.

Its subcellular location is the cytoplasm. It localises to the nucleus. Functionally, RNA reader protein, which recognizes and binds specific RNAs, thereby regulating RNA metabolic processes, such as pre-mRNA splicing, circular RNA (circRNA) formation, mRNA export, mRNA stability and/or translation. Involved in various cellular processes, such as mRNA storage into stress granules, apoptosis, interferon response, glial cell fate and development. Binds to the 5'-NACUAAY-N(1,20)-UAAY-3' RNA core sequence. Acts as a mRNA modification reader that specifically recognizes and binds mRNA transcripts modified by internal N(7)-methylguanine (m7G). Promotes the formation of circular RNAs (circRNAs): acts by binding to sites flanking circRNA-forming exons. CircRNAs are produced by back-splicing circularization of pre-mRNAs. Required to protect and promote stability of mRNAs which promotes oligodendrocyte differentiation. Acts as an important regulator of muscle development: required during early skeletal myofibril formation by regulating the accumulation of the muscle-specific tropomyosin-3 (tpm3) transcripts. The protein is Protein quaking-A of Danio rerio (Zebrafish).